The chain runs to 132 residues: Small ribosomal subunit protein uS8 (132 aa).

This sequence belongs to the universal ribosomal protein uS8 family. Part of the 30S ribosomal subunit. Contacts proteins S5 and S12.

One of the primary rRNA binding proteins, it binds directly to 16S rRNA central domain where it helps coordinate assembly of the platform of the 30S subunit. This Ehrlichia canis (strain Jake) protein is Small ribosomal subunit protein uS8.